The following is a 391-amino-acid chain: Suppressor APC domain-containing protein 2 (391 aa).

The interval 1–20 is disordered; that stretch reads MAVAAMAERGRLSHAAPAPS. T218 is modified (phosphothreonine). A coiled-coil region spans residues 226–277; the sequence is SLLKQMKELDQEQEVLLQGLEMMARGRDWYQQQLQRVQERQRRLSQSRAAAD. S283 carries the phosphoserine modification. Residues 340 to 381 adopt a coiled-coil conformation; it reads LKEQNRLLTQEVTDKSERITQLEQEKSALIKQLFEARALSQQ.

In terms of assembly, interacts with a spindle orientation complex at least composed of GNAI1, GPSM2 and NUMA1. Interacts with GPSM2 (via TPR motifs); this interaction is required to prevent GPSM2 anchoring at the mitotic apical cortex and is inhibited in presence of NUMA1 in a dose dependent manner. Interacts with PARD3. In terms of tissue distribution, expressed in the retina. Expressed in retinal progenitor cells and newly differentiated neurons but not in mature retinal cells (at protein level).

Its subcellular location is the cytoplasm. It is found in the nucleus. It localises to the cell cortex. The protein localises to the apical cell membrane. The protein resides in the cell junction. Its subcellular location is the tight junction. Its function is as follows. Plays a role in planar mitotic spindle orientation in retinal progenitor cells (RPCs) and promotes the production of symmetric terminal divisions. Negatively regulates the mitotic apical cortex localization of GPSM2. Involved also in positive regulation of cell proliferation and tumor cell growth. This is Suppressor APC domain-containing protein 2 from Mus musculus (Mouse).